The following is a 134-amino-acid chain: Iron-sulfur cluster insertion protein ErpA (134 aa).

The iron-sulfur cluster site is built by Cys47, Cys126, and Cys128.

This sequence belongs to the HesB/IscA family. Homodimer. The cofactor is iron-sulfur cluster.

Required for insertion of 4Fe-4S clusters for at least IspG. The protein is Iron-sulfur cluster insertion protein ErpA of Coxiella burnetii (strain RSA 331 / Henzerling II).